The chain runs to 258 residues: UPF0246 protein IL2146 (258 aa).

This sequence belongs to the UPF0246 family.

This Idiomarina loihiensis (strain ATCC BAA-735 / DSM 15497 / L2-TR) protein is UPF0246 protein IL2146.